We begin with the raw amino-acid sequence, 312 residues long: Ribosomal protein L11 methyltransferase (312 aa).

Residues Thr162, Gly183, Asp205, and Asn248 each coordinate S-adenosyl-L-methionine.

It belongs to the methyltransferase superfamily. PrmA family.

Its subcellular location is the cytoplasm. The enzyme catalyses L-lysyl-[protein] + 3 S-adenosyl-L-methionine = N(6),N(6),N(6)-trimethyl-L-lysyl-[protein] + 3 S-adenosyl-L-homocysteine + 3 H(+). Functionally, methylates ribosomal protein L11. This chain is Ribosomal protein L11 methyltransferase, found in Bacillus cereus (strain B4264).